The sequence spans 529 residues: MFS glucose transporter mfs1 (529 aa).

12 helical membrane-spanning segments follow: residues 7–27, 52–72, 86–106, 109–129, 138–158, 179–199, 272–292, 301–321, 330–350, 375–395, 415–439, and 446–464; these read VYFL…DISS, SITC…SFIA, ILWI…LLVV, VIAG…QAEI, VISL…FIQY, IPWG…FLFP, LQMW…VYIM, LLTA…AIIY, AILI…GLQG, AVGK…ATTI, AVSL…PLLW, and YMIF…FLTA.

It belongs to the major facilitator superfamily. Sugar transporter (TC 2.A.1.1) family.

It is found in the membrane. Probable MFS glucose transporter; part of the gene cluster 27 that mediates the biosynthesis of asparasone A, a sclerotium-specific anthraquinone pigment important for sclerotial survival. The polypeptide is MFS glucose transporter mfs1 (Aspergillus flavus (strain ATCC 200026 / FGSC A1120 / IAM 13836 / NRRL 3357 / JCM 12722 / SRRC 167)).